A 533-amino-acid polypeptide reads, in one-letter code: Retinoid isomerohydrolase (533 aa).

S2 carries the post-translational modification N-acetylserine. 2 positions are modified to phosphothreonine: T101 and T105. Residue C112 is the site of S-palmitoyl cysteine; in membrane form attachment. K113 carries the N6-acetyllysine modification. Residue S117 is modified to Phosphoserine. H180 is a binding site for Fe cation. The S-palmitoyl cysteine; in membrane form moiety is linked to residue C231. Fe cation contacts are provided by H241 and H313. Residues C329 and C330 are each lipidated (S-palmitoyl cysteine; in membrane form). H527 serves as a coordination point for Fe cation.

Belongs to the carotenoid oxygenase family. As to quaternary structure, interacts with MYO7A; this mediates light-dependent intracellular transport of RPE65. It depends on Fe(2+) as a cofactor. Post-translationally, palmitoylation by LRAT regulates ligand binding specificity; the palmitoylated form (membrane form) specifically binds all-trans-retinyl-palmitate, while the soluble unpalmitoylated form binds all-trans-retinol (vitamin A). As to expression, retinal pigment epithelium specific.

The protein localises to the cytoplasm. It localises to the cell membrane. It is found in the microsome membrane. It carries out the reaction an all-trans-retinyl ester + H2O = 11-cis-retinol + a fatty acid + H(+). The enzyme catalyses lutein = (3R,3'S)-zeaxanthin. The catalysed reaction is all-trans-retinyl hexadecanoate + H2O = 11-cis-retinol + hexadecanoate + H(+). Functionally, critical isomerohydrolase in the retinoid cycle involved in regeneration of 11-cis-retinal, the chromophore of rod and cone opsins. Catalyzes the cleavage and isomerization of all-trans-retinyl fatty acid esters to 11-cis-retinol which is further oxidized by 11-cis retinol dehydrogenase to 11-cis-retinal for use as visual chromophore. Essential for the production of 11-cis retinal for both rod and cone photoreceptors. Also capable of catalyzing the isomerization of lutein to meso-zeaxanthin an eye-specific carotenoid. The soluble form binds vitamin A (all-trans-retinol), making it available for LRAT processing to all-trans-retinyl ester. The membrane form, palmitoylated by LRAT, binds all-trans-retinyl esters, making them available for IMH (isomerohydrolase) processing to all-cis-retinol. The soluble form is regenerated by transferring its palmitoyl groups onto 11-cis-retinol, a reaction catalyzed by LRAT. The protein is Retinoid isomerohydrolase (RPE65) of Chlorocebus aethiops (Green monkey).